Reading from the N-terminus, the 622-residue chain is Protein FAM234B (622 aa).

The interval 1–68 (MATVLSRALK…EPDSDAEVAE (68 aa)) is disordered. A Phosphoserine modification is found at Ser-16. Thr-26 bears the Phosphothreonine mark. Phosphoserine is present on residues Ser-30, Ser-33, and Ser-62. Residues 104–124 (TSVFLLTLGISMILVLLCAFL) traverse the membrane as a helical segment.

Belongs to the FAM234 family.

It is found in the membrane. Its subcellular location is the golgi outpost. The protein resides in the cytoplasm. It localises to the cytoskeleton. The protein localises to the microtubule organizing center. This chain is Protein FAM234B, found in Homo sapiens (Human).